Reading from the N-terminus, the 54-residue chain is MLYYVLVFLVVALVAGALGFGGIAGASAGIAQILFFFFLALLVISLIASAIRKA.

2 helical membrane passes run 5-25 (VLVF…GIAG) and 29-48 (GIAQ…SLIA).

It belongs to the UPF0391 family.

The protein resides in the cell membrane. This chain is UPF0391 membrane protein BMEI0373, found in Brucella melitensis biotype 1 (strain ATCC 23456 / CCUG 17765 / NCTC 10094 / 16M).